A 142-amino-acid chain; its full sequence is MSTFTAKNETVQRDWYLVDAEGKTLGRLATELARRLRGKHKPVYTPHVDTGDYLVVINAEKIAVTGKKLQDKMYHRFTGYIGNLKTESLAQALERHPERVIEIAVKGMLPKGPLGRQMYRKLKVYAGTEHPHAAQQPQVLDI.

This sequence belongs to the universal ribosomal protein uL13 family. As to quaternary structure, part of the 50S ribosomal subunit.

Functionally, this protein is one of the early assembly proteins of the 50S ribosomal subunit, although it is not seen to bind rRNA by itself. It is important during the early stages of 50S assembly. This Stenotrophomonas maltophilia (strain K279a) protein is Large ribosomal subunit protein uL13.